Reading from the N-terminus, the 100-residue chain is Large ribosomal subunit protein eL30 (100 aa).

This sequence belongs to the eukaryotic ribosomal protein eL30 family.

This chain is Large ribosomal subunit protein eL30, found in Methanococcus maripaludis (strain DSM 14266 / JCM 13030 / NBRC 101832 / S2 / LL).